The primary structure comprises 858 residues: DNA mismatch repair protein MutS (858 aa).

ATP is bound at residue 600–607 (GPNMSGKS). Residues 803 to 823 (EAASDEVDDNNSENSPMTDAE) form a disordered region.

Belongs to the DNA mismatch repair MutS family.

Its function is as follows. This protein is involved in the repair of mismatches in DNA. It is possible that it carries out the mismatch recognition step. This protein has a weak ATPase activity. In Lactobacillus helveticus (strain DPC 4571), this protein is DNA mismatch repair protein MutS.